Here is a 119-residue protein sequence, read N- to C-terminus: Large ribosomal subunit protein uL18 (119 aa).

This sequence belongs to the universal ribosomal protein uL18 family. Part of the 50S ribosomal subunit; part of the 5S rRNA/L5/L18/L25 subcomplex. Contacts the 5S and 23S rRNAs.

In terms of biological role, this is one of the proteins that bind and probably mediate the attachment of the 5S RNA into the large ribosomal subunit, where it forms part of the central protuberance. In Paracoccus denitrificans (strain Pd 1222), this protein is Large ribosomal subunit protein uL18.